The chain runs to 262 residues: Shikimate dehydrogenase (NADP(+)) (262 aa).

Shikimate contacts are provided by residues S15 to S17 and T62. K66 serves as the catalytic Proton acceptor. E78 contacts NADP(+). N87 and D102 together coordinate shikimate. NADP(+) contacts are provided by residues G126–A130, N150–R155, and M214. A shikimate-binding site is contributed by Y216. Position 236 (G236) interacts with NADP(+).

Belongs to the shikimate dehydrogenase family. Homodimer.

The catalysed reaction is shikimate + NADP(+) = 3-dehydroshikimate + NADPH + H(+). Its pathway is metabolic intermediate biosynthesis; chorismate biosynthesis; chorismate from D-erythrose 4-phosphate and phosphoenolpyruvate: step 4/7. In terms of biological role, involved in the biosynthesis of the chorismate, which leads to the biosynthesis of aromatic amino acids. Catalyzes the reversible NADPH linked reduction of 3-dehydroshikimate (DHSA) to yield shikimate (SA). In Acinetobacter baumannii (strain ATCC 17978 / DSM 105126 / CIP 53.77 / LMG 1025 / NCDC KC755 / 5377), this protein is Shikimate dehydrogenase (NADP(+)).